We begin with the raw amino-acid sequence, 417 residues long: Inactive cytochrome P450 76AD1 (417 aa).

The helical transmembrane segment at 4–24 threads the bilayer; sequence ATLAMILAIWFISFHFIKLLF.

This sequence belongs to the cytochrome P450 family.

It is found in the membrane. It functions in the pathway pigment biosynthesis; betalain biosynthesis. Inactive cytochrome unable to convert L-DOPA to cyclo-DOPA in the betalain pathway and producing a yellow mutant phenotype. A frameshift replaces 108 amino acids of the active protein found in red beets (AC I3PFJ5) with 27 new residues followed by a stop codon. This chain is Inactive cytochrome P450 76AD1, found in Beta vulgaris (Sugar beet).